The sequence spans 176 residues: Peptide deformylase (176 aa).

The Fe cation site is built by C94 and H136. E137 is a catalytic residue. H140 is a Fe cation binding site.

Belongs to the polypeptide deformylase family. Fe(2+) serves as cofactor.

The catalysed reaction is N-terminal N-formyl-L-methionyl-[peptide] + H2O = N-terminal L-methionyl-[peptide] + formate. In terms of biological role, removes the formyl group from the N-terminal Met of newly synthesized proteins. Requires at least a dipeptide for an efficient rate of reaction. N-terminal L-methionine is a prerequisite for activity but the enzyme has broad specificity at other positions. The sequence is that of Peptide deformylase from Bartonella quintana (strain Toulouse) (Rochalimaea quintana).